The chain runs to 603 residues: UvrABC system protein C (603 aa).

A GIY-YIG domain is found at 15–92; it reads DQPGCYLMKD…IKKHDPRFNI (78 aa). The 36-residue stretch at 197–232 folds into the UVR domain; it reads KTVKNDLMKKMQVAAENMEFEKAGEFRDQINAIETT.

Belongs to the UvrC family. As to quaternary structure, interacts with UvrB in an incision complex.

The protein localises to the cytoplasm. The UvrABC repair system catalyzes the recognition and processing of DNA lesions. UvrC both incises the 5' and 3' sides of the lesion. The N-terminal half is responsible for the 3' incision and the C-terminal half is responsible for the 5' incision. The polypeptide is UvrABC system protein C (Listeria welshimeri serovar 6b (strain ATCC 35897 / DSM 20650 / CCUG 15529 / CIP 8149 / NCTC 11857 / SLCC 5334 / V8)).